The primary structure comprises 198 residues: Thymidine kinase (198 aa).

ATP contacts are provided by residues 9–16 and 87–90; these read STMNAGKS and DEAQ. Glu-88 serves as the catalytic Proton acceptor. Cys-145, Cys-147, Cys-182, and His-185 together coordinate Zn(2+).

Belongs to the thymidine kinase family. In terms of assembly, homotetramer.

The protein resides in the cytoplasm. The enzyme catalyses thymidine + ATP = dTMP + ADP + H(+). The sequence is that of Thymidine kinase from Ruegeria pomeroyi (strain ATCC 700808 / DSM 15171 / DSS-3) (Silicibacter pomeroyi).